Here is a 136-residue protein sequence, read N- to C-terminus: MRHKIKGRKLNVTSSHRQAMLANMAVALISHEQIKTTLPKAKELRSYIETLITKAKKADLAVRRSVLSKIKDKKAVEKLINILGTRYKDRPGGYTRIIKAGFRYGDLAPIAYIEFIDRDVNAKGNIKQDVNEDTKN.

The protein belongs to the bacterial ribosomal protein bL17 family. As to quaternary structure, part of the 50S ribosomal subunit. Contacts protein L32.

The protein is Large ribosomal subunit protein bL17 of Rickettsia canadensis (strain McKiel).